We begin with the raw amino-acid sequence, 90 residues long: Probable Fe(2+)-trafficking protein (90 aa).

This sequence belongs to the Fe(2+)-trafficking protein family.

Its function is as follows. Could be a mediator in iron transactions between iron acquisition and iron-requiring processes, such as synthesis and/or repair of Fe-S clusters in biosynthetic enzymes. The chain is Probable Fe(2+)-trafficking protein from Cupriavidus necator (strain ATCC 17699 / DSM 428 / KCTC 22496 / NCIMB 10442 / H16 / Stanier 337) (Ralstonia eutropha).